Reading from the N-terminus, the 444-residue chain is S-locus-specific glycoprotein BS29-1 (444 aa).

The first 28 residues, 1-28, serve as a signal peptide directing secretion; sequence MRGVIPNYHHSYTLLFFVILVLFPHVFS. Positions 31–159 constitute a Bulb-type lectin domain; sequence TLSPNEALTI…KTTALDRFMW (129 aa). N-linked (GlcNAc...) asparagine glycans are attached at residues Asn-43, Asn-125, Asn-180, Asn-243, and Asn-396. A PAN domain is found at 356 to 437; that stretch reads CGEGDGFLRM…GGQDLYLKVA (82 aa). Disulfide bonds link Cys-387–Cys-412 and Cys-395–Cys-397.

Stigma.

Its function is as follows. Involved in sporophytic self-incompatibility system (the inability of flowering plants to achieve self-fertilization). In Brassica oleracea var. alboglabra (Chinese kale), this protein is S-locus-specific glycoprotein BS29-1 (SLSG).